The following is a 464-amino-acid chain: GDNF family receptor alpha-2 (464 aa).

The N-terminal stretch at 1–21 (MILANAFCLFFFLDETLRSLA) is a signal peptide. Intrachain disulfides connect cysteine 40–cysteine 93, cysteine 47–cysteine 53, cysteine 63–cysteine 78, cysteine 95–cysteine 105, cysteine 161–cysteine 222, cysteine 168–cysteine 174, cysteine 185–cysteine 200, cysteine 195–cysteine 241, cysteine 224–cysteine 229, cysteine 251–cysteine 323, cysteine 258–cysteine 264, cysteine 275–cysteine 293, cysteine 285–cysteine 347, and cysteine 325–cysteine 335. N-linked (GlcNAc...) asparagine glycosylation is present at asparagine 52. Asparagine 357 is a glycosylation site (N-linked (GlcNAc...) asparagine). Positions 360 to 374 (DVNLSPKSPPFQATQ) are enriched in polar residues. A disordered region spans residues 360–392 (DVNLSPKSPPFQATQAPRVDKTPSLPDDLSDST). The span at 381 to 392 (TPSLPDDLSDST) shows a compositional bias: low complexity. Asparagine 413 is a glycosylation site (N-linked (GlcNAc...) asparagine). Asparagine 440 carries the GPI-anchor amidated asparagine lipid modification. Residues 441–464 (SGPRRTRPSAALTAASFLMLKLAL) constitute a propeptide, removed in mature form.

Belongs to the GDNFR family. Interacts with NRTN ligand and RET: forms a 2:2:2 ternary complex composed of NRTN ligand, GFRA2 and RET receptor. Also forms a 4:4:4 tetrameric complex composed of 4 copies of NRTN ligand, GFRA2 and RET receptor, which prevents endocytosis of RET. Interacts with SORL1.

The protein resides in the cell membrane. Functionally, receptor for neurturin (NRTN), a growth factor that supports the survival of sympathetic neurons. NRTN-binding leads to autophosphorylation and activation of the RET receptor. Also able to mediate GDNF signaling through the RET tyrosine kinase receptor. The polypeptide is GDNF family receptor alpha-2 (GFRA2) (Bos taurus (Bovine)).